A 605-amino-acid chain; its full sequence is Sulfite reductase [NADPH] flavoprotein alpha-component (605 aa).

In terms of domain architecture, Flavodoxin-like spans 68–206; it reads VTVLYGSQTG…PAAEWLEGVL (139 aa). FMN-binding positions include 74-78, 121-126, and 154-185; these read SQTGN, STHGEG, and VLALGDSSYEFFCQTGKEFDQRLEELGGKRIS. The interval 213–234 is disordered; it reads GGGSAAPAPAAASQTGESSYSR. The region spanning 235–454 is the FAD-binding FR-type domain; sequence TNPFRAEVLE…VQHNQNFKLP (220 aa). 392–395 is an FAD binding site; sequence RLYS. Residues aspartate 495 and 525 to 533 contribute to the NADP(+) site; that span reads SRDTEEKVY.

As to quaternary structure, alpha(8)-beta(8). The alpha component is a flavoprotein, the beta component is a hemoprotein. Requires FAD as cofactor. It depends on FMN as a cofactor.

It carries out the reaction hydrogen sulfide + 3 NADP(+) + 3 H2O = sulfite + 3 NADPH + 4 H(+). It participates in sulfur metabolism; hydrogen sulfide biosynthesis; hydrogen sulfide from sulfite (NADPH route): step 1/1. Its function is as follows. Component of the sulfite reductase complex that catalyzes the 6-electron reduction of sulfite to sulfide. This is one of several activities required for the biosynthesis of L-cysteine from sulfate. The flavoprotein component catalyzes the electron flow from NADPH -&gt; FAD -&gt; FMN to the hemoprotein component. The chain is Sulfite reductase [NADPH] flavoprotein alpha-component (cysJ) from Bacillus subtilis (strain 168).